A 164-amino-acid chain; its full sequence is Ribosome maturation factor RimM (164 aa).

A PRC barrel domain is found at 93 to 164 (DSEYYVANLN…FVVIVPPEFI (72 aa)).

It belongs to the RimM family. As to quaternary structure, binds ribosomal protein uS19.

The protein localises to the cytoplasm. In terms of biological role, an accessory protein needed during the final step in the assembly of 30S ribosomal subunit, possibly for assembly of the head region. Essential for efficient processing of 16S rRNA. May be needed both before and after RbfA during the maturation of 16S rRNA. It has affinity for free ribosomal 30S subunits but not for 70S ribosomes. This chain is Ribosome maturation factor RimM, found in Orientia tsutsugamushi (strain Boryong) (Rickettsia tsutsugamushi).